The sequence spans 406 residues: 4-hydroxy-3-methylbut-2-en-1-yl diphosphate synthase (flavodoxin) (406 aa).

4 residues coordinate [4Fe-4S] cluster: cysteine 297, cysteine 300, cysteine 343, and glutamate 350.

The protein belongs to the IspG family. Homodimer. [4Fe-4S] cluster is required as a cofactor.

The enzyme catalyses (2E)-4-hydroxy-3-methylbut-2-enyl diphosphate + oxidized [flavodoxin] + H2O + 2 H(+) = 2-C-methyl-D-erythritol 2,4-cyclic diphosphate + reduced [flavodoxin]. The protein operates within isoprenoid biosynthesis; isopentenyl diphosphate biosynthesis via DXP pathway; isopentenyl diphosphate from 1-deoxy-D-xylulose 5-phosphate: step 5/6. Its function is as follows. Converts 2C-methyl-D-erythritol 2,4-cyclodiphosphate (ME-2,4cPP) into 1-hydroxy-2-methyl-2-(E)-butenyl 4-diphosphate. The protein is 4-hydroxy-3-methylbut-2-en-1-yl diphosphate synthase (flavodoxin) of Thermus thermophilus (strain ATCC BAA-163 / DSM 7039 / HB27).